A 187-amino-acid polypeptide reads, in one-letter code: UPF0340 protein SP_0663 (187 aa).

This sequence belongs to the UPF0340 family.

This is UPF0340 protein SP_0663 from Streptococcus pneumoniae serotype 4 (strain ATCC BAA-334 / TIGR4).